The following is a 717-amino-acid chain: DNA ligase (717 aa).

NAD(+) is bound by residues 44–48, 93–94, and E127; these read DAEYD and SL. K129 serves as the catalytic N6-AMP-lysine intermediate. NAD(+) contacts are provided by R150, E186, K302, and K326. Residues C431, C434, C455, and C461 each coordinate Zn(2+). The 79-residue stretch at 639–717 folds into the BRCT domain; that stretch reads TSGSPVVGKT…EDEWLELIGG (79 aa).

The protein belongs to the NAD-dependent DNA ligase family. LigA subfamily. It depends on Mg(2+) as a cofactor. Mn(2+) is required as a cofactor.

It catalyses the reaction NAD(+) + (deoxyribonucleotide)n-3'-hydroxyl + 5'-phospho-(deoxyribonucleotide)m = (deoxyribonucleotide)n+m + AMP + beta-nicotinamide D-nucleotide.. In terms of biological role, DNA ligase that catalyzes the formation of phosphodiester linkages between 5'-phosphoryl and 3'-hydroxyl groups in double-stranded DNA using NAD as a coenzyme and as the energy source for the reaction. It is essential for DNA replication and repair of damaged DNA. This chain is DNA ligase, found in Rhizobium rhizogenes (strain K84 / ATCC BAA-868) (Agrobacterium radiobacter).